The primary structure comprises 417 residues: Probable medium-chain specific acyl-CoA dehydrogenase 10, mitochondrial (417 aa).

A mitochondrion-targeting transit peptide spans 1 to 15 (MLSRIATSSLGLSRS). Residues 148 to 157 (YCVTEPGAGS) and 181 to 183 (WIT) contribute to the FAD site. Serine 157 contributes to the substrate binding site. Position 268-271 (268-271 (DMTR)) interacts with substrate. FAD-binding positions include 306–307 (HQ) and 364–368 (QIFGG). The active-site Proton acceptor is the glutamate 391. Glycine 392 is a substrate binding site. 393–395 (TSQ) provides a ligand contact to FAD.

The protein belongs to the acyl-CoA dehydrogenase family. In terms of assembly, homotetramer. FAD is required as a cofactor. In terms of tissue distribution, expressed in the epidermis and intestine.

Its subcellular location is the mitochondrion matrix. It carries out the reaction a medium-chain 2,3-saturated fatty acyl-CoA + oxidized [electron-transfer flavoprotein] + H(+) = a medium-chain (2E)-enoyl-CoA + reduced [electron-transfer flavoprotein]. It functions in the pathway lipid metabolism; mitochondrial fatty acid beta-oxidation. Its function is as follows. This enzyme is specific for acyl chain lengths of 4 to 16. The sequence is that of Probable medium-chain specific acyl-CoA dehydrogenase 10, mitochondrial (acdh-10) from Caenorhabditis elegans.